The chain runs to 1641 residues: Ophiophagus venom factor (1641 aa).

Residues 1 to 22 (MEGMALYLVAALLIGFPGSSHG) form the signal peptide. N-linked (GlcNAc...) asparagine glycans are attached at residues Asn181 and Asn209. The Mg(2+) site is built by Pro507, Asp530, Val531, and Asp533. 12 disulfide bridges follow: Cys535–Cys796, Cys604–Cys639, Cys672–Cys699, Cys673–Cys706, Cys686–Cys707, Cys852–Cys1491, Cys1336–Cys1467, Cys1367–Cys1436, Cys1484–Cys1489, Cys1496–Cys1568, Cys1515–Cys1639, and Cys1615–Cys1624. A propeptide spanning residues 645-728 (RRRRSSVLLL…WESGLFLPRN (84 aa)) is cleaved from the precursor. Residues 649–727 (SSVLLLDSKA…QWESGLFLPR (79 aa)) form a C3a-like domain region. An Anaphylatoxin-like domain is found at 672–707 (CCEDSMHENPMGYTCEKRAKYIQEGDACKAAFLECC). Residues 731 to 742 (EDGFIQDSDIIP) form a factor B binding site region. The propeptide occupies 981–1259 (HLIITPSGCG…VMLFQALAEY (279 aa)). Residues 981-1259 (HLIITPSGCG…VMLFQALAEY (279 aa)) are C3d-like domain. The segment at residues 989–992 (CGEQ) is a cross-link (isoglutamyl cysteine thioester (Cys-Gln)). The factor H binding site stretch occupies residues 1186–1249 (VLMAASTGKN…GGTYGQTQAT (64 aa)). Positions 1496–1639 (CSLLSQQEKI…LSNILTIFGC (144 aa)) constitute an NTR domain.

This sequence belongs to the venom complement C3 homolog family. In terms of assembly, heterotrimer of alpha, beta and gamma chains; disulfide-linked. May be active with factor B in the presence of factor D. Post-translationally, first processed by the removal of 4 Arg residues by furin-type protease, forming two chains, alpha and gamma/beta precursor, linked by a disulfide bond. Probably, a cobrin-like protease cleaves the C3a-like domain and then the C3d-like domain, generating the mature venom factor (OVF). In terms of processing, the beta chain is not glycosylated. As to expression, expressed by the venom gland.

The protein resides in the secreted. In terms of biological role, complement-activating protein in cobra venom. It is a structural and functional analog of complement component C3b, the activated form of C3. It binds factor B (CFB), which is subsequently cleaved by factor D (CFD) to form the bimolecular complex OVF/Bb. OVF/Bb is a C3/C5 convertase that cleaves both complement components C3 and C5. Structurally, it resembles the C3b degradation product C3c, which is not able to form a C3/C5 convertase. Unlike C3b/Bb, OVF/Bb is a stable complex and completely resistant to the actions of complement regulatory factors H (CFH) and I (CFI). Therefore, OVF continuously activates complement. As a result, OVF exhibits complement-depleting activity. The protein is Ophiophagus venom factor of Ophiophagus hannah (King cobra).